The following is a 273-amino-acid chain: Bis(5'-nucleosyl)-tetraphosphatase, symmetrical (273 aa).

Belongs to the Ap4A hydrolase family.

The catalysed reaction is P(1),P(4)-bis(5'-adenosyl) tetraphosphate + H2O = 2 ADP + 2 H(+). Its function is as follows. Hydrolyzes diadenosine 5',5'''-P1,P4-tetraphosphate to yield ADP. The chain is Bis(5'-nucleosyl)-tetraphosphatase, symmetrical (apaH) from Buchnera aphidicola subsp. Schizaphis graminum (strain Sg).